A 146-amino-acid chain; its full sequence is UPF0178 protein BCAH187_A3092 (146 aa).

It belongs to the UPF0178 family.

This chain is UPF0178 protein BCAH187_A3092, found in Bacillus cereus (strain AH187).